The primary structure comprises 318 residues: Thymidylate synthase (318 aa).

DUMP is bound by residues arginine 25 and 180–181 (RR). The Nucleophile role is filled by cysteine 200. Residues 220 to 223 (RSGD), asparagine 231, and 261 to 263 (HIY) contribute to the dUMP site. Position 223 (aspartate 223) interacts with (6R)-5,10-methylene-5,6,7,8-tetrahydrofolate. Alanine 317 serves as a coordination point for (6R)-5,10-methylene-5,6,7,8-tetrahydrofolate.

Belongs to the thymidylate synthase family. Bacterial-type ThyA subfamily. As to quaternary structure, homodimer.

It is found in the cytoplasm. The enzyme catalyses dUMP + (6R)-5,10-methylene-5,6,7,8-tetrahydrofolate = 7,8-dihydrofolate + dTMP. The protein operates within pyrimidine metabolism; dTTP biosynthesis. Its function is as follows. Catalyzes the reductive methylation of 2'-deoxyuridine-5'-monophosphate (dUMP) to 2'-deoxythymidine-5'-monophosphate (dTMP) while utilizing 5,10-methylenetetrahydrofolate (mTHF) as the methyl donor and reductant in the reaction, yielding dihydrofolate (DHF) as a by-product. This enzymatic reaction provides an intracellular de novo source of dTMP, an essential precursor for DNA biosynthesis. The chain is Thymidylate synthase from Lactobacillus delbrueckii subsp. bulgaricus (strain ATCC BAA-365 / Lb-18).